The following is a 249-amino-acid chain: Small ribosomal subunit protein uS2 (249 aa).

This sequence belongs to the universal ribosomal protein uS2 family.

The sequence is that of Small ribosomal subunit protein uS2 from Polynucleobacter necessarius subsp. necessarius (strain STIR1).